Here is a 264-residue protein sequence, read N- to C-terminus: 3-methyl-2-oxobutanoate hydroxymethyltransferase (264 aa).

Residues aspartate 45 and aspartate 84 each coordinate Mg(2+). Residues 45-46, aspartate 84, and lysine 112 each bind 3-methyl-2-oxobutanoate; that span reads DS. Glutamate 114 is a Mg(2+) binding site. Glutamate 181 (proton acceptor) is an active-site residue.

Belongs to the PanB family. Homodecamer; pentamer of dimers. It depends on Mg(2+) as a cofactor.

Its subcellular location is the cytoplasm. It carries out the reaction 3-methyl-2-oxobutanoate + (6R)-5,10-methylene-5,6,7,8-tetrahydrofolate + H2O = 2-dehydropantoate + (6S)-5,6,7,8-tetrahydrofolate. Its pathway is cofactor biosynthesis; (R)-pantothenate biosynthesis; (R)-pantoate from 3-methyl-2-oxobutanoate: step 1/2. Functionally, catalyzes the reversible reaction in which hydroxymethyl group from 5,10-methylenetetrahydrofolate is transferred onto alpha-ketoisovalerate to form ketopantoate. This chain is 3-methyl-2-oxobutanoate hydroxymethyltransferase, found in Psychromonas ingrahamii (strain DSM 17664 / CCUG 51855 / 37).